Here is a 370-residue protein sequence, read N- to C-terminus: Acyl-CoA:lysophosphatidylglycerol acyltransferase 1 (370 aa).

The helical transmembrane segment at F22–I42 threads the bilayer. The HXXXXD motif motif lies at H101–D106. A helical membrane pass occupies residues L342–I362.

The protein belongs to the 1-acyl-sn-glycerol-3-phosphate acyltransferase family. In terms of tissue distribution, highly expressed in liver and placenta. Also expressed in peripheral blood, lung, kidney and brain. Detected at lower levels in colon. High expression is detected in brain and testis.

The protein resides in the endoplasmic reticulum membrane. It catalyses the reaction a 2-acyl-sn-glycero-3-phosphoethanolamine + octadecanoyl-CoA = 1-octadecanoyl-2-acyl-sn-glycero-3-phosphoethanolamine + CoA. The enzyme catalyses 2-(9Z-octadecenoyl)-sn-glycero-3-phosphoethanolamine + octadecanoyl-CoA = 1-octadecanoyl-2-(9Z-octadecenoyl)-sn-glycero-3-phosphoethanolamine + CoA. It carries out the reaction a 2-acyl-sn-glycero-3-phosphoethanolamine + hexadecanoyl-CoA = 1-hexadecanoyl-2-acyl-sn-glycero-3-phosphoethanolamine + CoA. The catalysed reaction is 2-(9Z-octadecenoyl)-sn-glycero-3-phosphoethanolamine + hexadecanoyl-CoA = 1-hexadecanoyl-2-(9Z-octadecenoyl)-sn-glycero-3-phosphoethanolamine + CoA. It catalyses the reaction 1-tetradecanoyl-sn-glycero-3-phospho-(1'-sn-glycerol) + hexadecanoyl-CoA = 1-tetradecanoyl-2-hexadecanoyl-sn-glycero-3-phospho-(1'-sn-glycerol) + CoA. The enzyme catalyses 1-hexadecanoyl-sn-glycero-3-phospho-(1'-sn-glycerol) + dodecanoyl-CoA = 1-hexadecanoyl-2-dodecanoyl-sn-glycero-3-phospho-(1'-sn-glycerol) + CoA. It carries out the reaction 1-hexadecanoyl-sn-glycero-3-phospho-(1'-sn-glycerol) + hexadecanoyl-CoA = 1,2-dihexadecanoyl-sn-glycero-3-phospho-(1'-sn-glycerol) + CoA. The catalysed reaction is 1-hexadecanoyl-sn-glycero-3-phospho-(1'-sn-glycerol) + octadecanoyl-CoA = 1-hexadecanoyl-2-octadecanoyl-sn-glycero-3-phospho-(1'-sn-glycerol) + CoA. It catalyses the reaction 1-octadecanoyl-sn-glycero-3-phospho-(1'-sn-glycerol) + hexadecanoyl-CoA = 1-octadecanoyl-2-hexadecanoyl-sn-glycero-3-phospho-(1'-sn-glycerol) + CoA. The enzyme catalyses 1-(9Z-octadecenoyl)-sn-glycero-3-phospho-(1'-sn-glycerol) + dodecanoyl-CoA = 1-(9Z-octadecenoyl)-2-dodecanoyl-sn-glycero-3-phospho-(1'-sn-glycerol) + CoA. It carries out the reaction 1-hexadecanoyl-sn-glycero-3-phospho-(1'-sn-glycerol) + (9Z)-octadecenoyl-CoA = 1-hexadecanoyl-2-(9Z-octadecenoyl)-sn-glycero-3-phospho-(1'-sn-glycerol) + CoA. The catalysed reaction is 1-(9Z-octadecenoyl)-sn-glycero-3-phospho-(1'-sn-glycerol) + hexadecanoyl-CoA = 1-(9Z-octadecenoyl)-2-hexadecanoyl-sn-glycero-3-phospho-(1'-sn-glycerol) + CoA. It catalyses the reaction 1-(9Z-octadecenoyl)-sn-glycero-3-phospho-(1'-sn-glycerol) + (9Z)-octadecenoyl-CoA = 1,2-di-(9Z-octadecenoyl)-sn-glycero-3-phospho-(1'-sn-glycerol) + CoA. The enzyme catalyses a 2-acylglycerol + an acyl-CoA = a 1,2-diacylglycerol + CoA. It carries out the reaction a 2-acylglycerol + hexadecanoyl-CoA = a 1-hexadecanoyl-2-acylglycerol + CoA. The catalysed reaction is a 1-acylglycerol + hexadecanoyl-CoA = an hexadecanoyl-acylglycerol + CoA. It catalyses the reaction a 2-acyl-sn-glycero-3-phosphocholine + an acyl-CoA = a 1,2-diacyl-sn-glycero-3-phosphocholine + CoA. The enzyme catalyses 2-(9Z-octadecenoyl)-sn-glycero-3-phosphocholine + octadecanoyl-CoA = 1-octadecanoyl-2-(9Z-octadecenoyl)-sn-glycero-3-phosphocholine + CoA. It carries out the reaction 2-(9Z,12Z-octadecadienoyl)-sn-glycero-3-phosphocholine + octadecanoyl-CoA = 1-octadecanoyl-2-(9Z,12Z)-octadecadienoyl-sn-glycero-3-phosphocholine + CoA. The catalysed reaction is 2-(5Z,8Z,11Z,14Z)-eicosatetraenoyl-sn-glycero-3-phosphocholine + octadecanoyl-CoA = 1-octadecanoyl-2-(5Z,8Z,11Z,14Z-eicosatetraenoyl)-sn-glycero-3-phosphocholine + CoA. It catalyses the reaction 2-(9Z-octadecenoyl)-sn-glycero-3-phosphocholine + hexadecanoyl-CoA = 1-hexadecanoyl-2-(9Z-octadecenoyl)-sn-glycero-3-phosphocholine + CoA. The enzyme catalyses 2-(9Z-octadecenoyl)-sn-glycero-3-phospho-L-serine + hexadecanoyl-CoA = 1-hexadecanoyl-2-(9Z-octadecenoyl)-sn-glycero-3-phospho-L-serine + CoA. It carries out the reaction 2-(4Z,7Z,10Z,13Z,16Z,19Z-docosahexaenoyl)-sn-glycero-3-phosphocholine + octadecanoyl-CoA = 1-octadecanoyl-2-(4Z,7Z,10Z,13Z,16Z,19Z-docosahexaenoyl)-sn-glycero-3-phosphocholine + CoA. The catalysed reaction is 1-(9Z-octadecenoyl)-sn-glycero-3-phospho-L-serine + octadecanoyl-CoA = 1-(9Z-octadecenoyl)-2-octadecanoyl-sn-glycero-3-phospho-L-serine + CoA. It catalyses the reaction a 2-acyl-sn-glycero-3-phosphoethanolamine + a fatty acyl-CoA = a 1,2-diacyl-sn-glycero-3-phosphoethanolamine + CoA. In terms of biological role, lysophospholipid acyltransferase involved in fatty acyl chain remodeling of glycerophospholipids in the endoplasmic reticulum membrane. Selectively catalyzes the transfer and esterification of saturated long-chain fatty acids from acyl-CoA to the sn-1 position of 1-lyso-2-acyl phosphatidylethanolamines (1-lyso-PE, LPE), with a preference for stearoyl CoA over palmitoyl CoA as acyl donor. Acts in concert with an unknown phospholipase A1 to convert palmitate phosphatidylethanolamine (PE) species into stearate ones. Provides substrates to the PE methylation pathway, controlling stearate/palmitate composition of PE and phosphatidylcholine (PC) species with an overall impact on de novo hepatic lipid synthesis, body fat content and life span. Can acylate lysophosphatidylglycerols (LPG) using various saturated fatty acyl-CoAs as acyl donors. Can also acylate monoacylglycerols with a preference for 2-monoacylglycerols over 1-monoacylglycerols. Has no activity toward lysophosphatidic acids (LPA). The protein is Acyl-CoA:lysophosphatidylglycerol acyltransferase 1 of Homo sapiens (Human).